The chain runs to 146 residues: Hemoglobin subunit beta (146 aa).

The residue at position 1 (Val1) is an N-acetylvaline. Positions 2–146 (HLTADEKAAV…VANALAHKYH (145 aa)) constitute a Globin domain. Position 12 is a phosphothreonine (Thr12). A Phosphoserine modification is found at Ser44. Lys59 is subject to N6-acetyllysine. His63 provides a ligand contact to heme b. Lys82 bears the N6-acetyllysine mark. His92 contacts heme b. The residue at position 93 (Cys93) is an S-nitrosocysteine. N6-acetyllysine is present on Lys144.

Belongs to the globin family. In terms of assembly, heterotetramer of two alpha chains and two beta chains. As to expression, red blood cells.

Its function is as follows. Involved in oxygen transport from the lung to the various peripheral tissues. The protein is Hemoglobin subunit beta (HBB) of Odobenus rosmarus divergens (Pacific walrus).